The primary structure comprises 1343 residues: DNA-directed RNA polymerase subunit beta (1343 aa).

It belongs to the RNA polymerase beta chain family. In terms of assembly, the RNAP catalytic core consists of 2 alpha, 1 beta, 1 beta' and 1 omega subunit. When a sigma factor is associated with the core the holoenzyme is formed, which can initiate transcription.

The catalysed reaction is RNA(n) + a ribonucleoside 5'-triphosphate = RNA(n+1) + diphosphate. DNA-dependent RNA polymerase catalyzes the transcription of DNA into RNA using the four ribonucleoside triphosphates as substrates. The chain is DNA-directed RNA polymerase subunit beta from Shewanella loihica (strain ATCC BAA-1088 / PV-4).